The chain runs to 597 residues: MIAKQKIKILIGVIIVIATYHFIVSSNVRSKDLSDLVDLGSSDKSTTENERPKNNIVTNNRLDNPPNEDIPHAEPDSPPQEPPKSGNKPDFSIFFEGLEKFAIKQPGIKDKYTSEKAKEKFSTDDNFLFGKEYLENVLDIPQATFKELKDSHKRYVDEHIPKMLQRVKTFGSLAPSDKEWESYKGSSGYIIVGGGRFTWLSFLVIKQLRATGAKLPVEMFIATESDYEKEFCEKVLPKYNARCNVFDYKLADDLKKRFDIGGYQYKMLALLSSKFENVLYLDSDNFPTRNVDYLFESDLYKENNLLLWPDAWARTTNPKYYEIAGVPVKENKLRYSKYDEKQAGGKDKLKPLSEYTFKDSWYHDFEGTLPDPTSETGMFMVNKSSHLKTLLLCLYYNVFGPQYYYPLLTQGSAGEGDKETFIAAAHVMKEPWYQCARQFKWTGYVSKVDNKFTSKALAHYDPVQAQDTTRQDVDIIFMHLSYPKFYPNWLADNHDLVYADTDEHIRMYSSINKNVGYDFDLRVMQFFTEGLCPNYYDSKTGKPIENIPHIDYTNDYMGNHLMYVKDEEQNNIDRCNKVFIPHLKWLKETAEIPTVVS.

Residues Met1–Lys6 lie on the Cytoplasmic side of the membrane. The chain crosses the membrane as a helical span at residues Ile7–Asn27. The Extracellular segment spans residues Val28 to Ser597. The segment at Leu39–Pro89 is disordered. Asn382 carries N-linked (GlcNAc...) asparagine glycosylation.

Belongs to the MNN1/MNT family. The cofactor is Mn(2+).

It is found in the golgi apparatus membrane. The protein operates within protein modification; protein glycosylation. With respect to regulation, enzyme activity is regulated by iron. Alpha-1,2-mannosyltransferase required for cell wall integrity. Responsible for addition of the first alpha-1,2-linked mannose to form the branches on the mannan backbone of oligosaccharides. Addition of alpha-1,2-mannose is required for stabilization of the alpha-1,6-mannose backbone and hence regulates mannan fibril length; and is important for both immune recognition and virulence. Promotes iron uptake and usage along the endocytosis pathway under iron-limiting conditions. The protein is Alpha-1,2-mannosyltransferase MNN2 (MNN2) of Candida albicans (strain SC5314 / ATCC MYA-2876) (Yeast).